A 544-amino-acid chain; its full sequence is MMMPRLVPRWPAWLFCWRAACIQGASVRQKMWAGPSKIPGLGGPRGAWGTSPLVPRGSCSASSRTPEVTLTPERYPVQRLPFSVVSEDDLAALERVVPGRVITDPEELEPPNVDWLRTVRGSSKVLLRPRTTQEVAHILRYCHERNLAVNPQGGNTGMVGGSTPVFDEIILSTALMNQVLSFHDVSGVLVCQAGCVLEALSQYVEERGFIMPLDLGAKGSCHIGGNVATNAGGLRVLRYGSLRGTVLGLEVVLADGTVLNCLTSLRKDNTGYDLKQLFIGSEGTLGVITAVSILCPPKPSTVNVAFLGCPGFAEVLQTFRTCRAMLGEILSAFEFMDAECMKLVRLHLGLSCPVQESPFYVLIETAGSGPGHDAEKLGCFLEQVLDSGLVTDGTLGSDERRIKMLWALRERITEALSRDGYVYKYDLSLPLDRLYDLVGDLRARLGPSAKHVVGYGHLGDGNLHLNVTSEAFSTSLLGALEPYVYEWTAGQRGSVSAEHGLGFKKKDVLGYSKPPEALQLMRQLKALLDPKGILNPYKMLPTHA.

A mitochondrion-targeting transit peptide spans 1–10 (MMMPRLVPRW). The FAD-binding PCMH-type domain occupies 119–298 (VRGSSKVLLR…TAVSILCPPK (180 aa)). At Lys124 the chain carries N6-succinyllysine. Residues Arg409, Thr413, and Lys424 each contribute to the (R)-2-hydroxyglutarate site. Arg409 is a (R)-lactate binding site. Residues Arg409, Thr413, and Lys424 each contribute to the (R)-malate site. Residues His457 and His464 each contribute to the Zn(2+) site. (R)-2-hydroxyglutarate is bound at residue Asn466. Glu498 is a binding site for Zn(2+). His499 is a (R)-2-hydroxyglutarate binding site. His499 serves as a coordination point for (R)-lactate. His499 provides a ligand contact to (R)-malate.

Belongs to the FAD-binding oxidoreductase/transferase type 4 family. The cofactor is FAD.

It is found in the mitochondrion. It catalyses the reaction (R)-2-hydroxyglutarate + A = 2-oxoglutarate + AH2. The catalysed reaction is (R)-malate + A = oxaloacetate + AH2. With respect to regulation, activated by zinc and cobalt ions. Its function is as follows. Catalyzes the oxidation of D-2-hydroxyglutarate (D-2-HG) to alpha-ketoglutarate. Also catalyzes the oxidation of other D-2-hydroxyacids, such as D-malate (D-MAL) and D-lactate (D-LAC). Exhibits high activities towards D-2-HG and D-MAL but a very weak activity towards D-LAC. This chain is D-2-hydroxyglutarate dehydrogenase, mitochondrial (D2HGDH), found in Bos taurus (Bovine).